Reading from the N-terminus, the 201-residue chain is Holliday junction branch migration complex subunit RuvA (201 aa).

The tract at residues 1–64 (MIGRLRGTLA…EDAHLLYGFA (64 aa)) is domain I. The segment at 65–143 (EKRERELFRE…AWENMPTIAP (79 aa)) is domain II. The segment at 144-152 (LVMEPRASA) is flexible linker. The interval 153–201 (TVSSAEADAVSALIALGFKPQEASRAVAAVPGEDLSSEEMIRQALKGMV) is domain III.

The protein belongs to the RuvA family. Homotetramer. Forms an RuvA(8)-RuvB(12)-Holliday junction (HJ) complex. HJ DNA is sandwiched between 2 RuvA tetramers; dsDNA enters through RuvA and exits via RuvB. An RuvB hexamer assembles on each DNA strand where it exits the tetramer. Each RuvB hexamer is contacted by two RuvA subunits (via domain III) on 2 adjacent RuvB subunits; this complex drives branch migration. In the full resolvosome a probable DNA-RuvA(4)-RuvB(12)-RuvC(2) complex forms which resolves the HJ.

The protein resides in the cytoplasm. In terms of biological role, the RuvA-RuvB-RuvC complex processes Holliday junction (HJ) DNA during genetic recombination and DNA repair, while the RuvA-RuvB complex plays an important role in the rescue of blocked DNA replication forks via replication fork reversal (RFR). RuvA specifically binds to HJ cruciform DNA, conferring on it an open structure. The RuvB hexamer acts as an ATP-dependent pump, pulling dsDNA into and through the RuvAB complex. HJ branch migration allows RuvC to scan DNA until it finds its consensus sequence, where it cleaves and resolves the cruciform DNA. The chain is Holliday junction branch migration complex subunit RuvA from Pseudomonas aeruginosa (strain LESB58).